Consider the following 368-residue polypeptide: Germination protease (368 aa).

Positions 1–16 (MEKKKLDLSQYAVRTD) are excised as a propeptide.

The protein belongs to the peptidase A25 family. Homotetramer. Autoproteolytically processed. The inactive tetrameric zymogen termed p46 autoprocesses to a smaller form termed p41, which is active only during spore germination.

It catalyses the reaction Endopeptidase action with P4 Glu or Asp, P1 preferably Glu &gt; Asp, P1' hydrophobic and P2' Ala.. In terms of biological role, initiates the rapid degradation of small, acid-soluble proteins during spore germination. The chain is Germination protease from Bacillus licheniformis (strain ATCC 14580 / DSM 13 / JCM 2505 / CCUG 7422 / NBRC 12200 / NCIMB 9375 / NCTC 10341 / NRRL NRS-1264 / Gibson 46).